We begin with the raw amino-acid sequence, 295 residues long: UDP-N-acetylenolpyruvoylglucosamine reductase (295 aa).

One can recognise an FAD-binding PCMH-type domain in the interval 26–189 (VGGRADILFK…VEAEFKGVNS (164 aa)). Residue arginine 169 is part of the active site. Catalysis depends on cysteine 218, which acts as the Proton donor. Glutamate 288 is an active-site residue.

The protein belongs to the MurB family. FAD is required as a cofactor.

It is found in the cytoplasm. The catalysed reaction is UDP-N-acetyl-alpha-D-muramate + NADP(+) = UDP-N-acetyl-3-O-(1-carboxyvinyl)-alpha-D-glucosamine + NADPH + H(+). It functions in the pathway cell wall biogenesis; peptidoglycan biosynthesis. Functionally, cell wall formation. In Wolbachia sp. subsp. Drosophila simulans (strain wRi), this protein is UDP-N-acetylenolpyruvoylglucosamine reductase.